Consider the following 330-residue polypeptide: Probable ADP,ATP carrier protein At5g56450 (330 aa).

Over residues 1 to 10 (MCISKEDEED) the composition is skewed to acidic residues. Positions 1–22 (MCISKEDEEDPSRNRRNQSPLS) are disordered. The next 6 helical transmembrane spans lie at 27–61 (LKHFQKDLLAGAVMGGVVHTIVAPIERAKLLLQTQ), 103–127 (GSSVLRYYPSVALNFSLKDLYRSIL), 137–171 (IFSGALANFMAGSAAGCTALIVVYPLDIAHTRLAA), 203–230 (GLPASLHGVIIHRGLYFGGFDTVKEIFS), 236–270 (ELALWKRWGLAQAVTTSAGLASYPLDTVRRRIMMQ), and 300–325 (GALSNMFRSTGSAAILVFYDEVKRFL). 3 Solcar repeats span residues 28–126 (KHFQ…YRSI), 139–228 (SGAL…VKEI), and 241–324 (KRWG…VKRF). R108 and K120 together coordinate ADP. Position 264 (R264) interacts with ADP. The Substrate recognition motif lies at 264 to 269 (RRRIMM).

It belongs to the mitochondrial carrier (TC 2.A.29) family. As to quaternary structure, monomer.

Its subcellular location is the membrane. It carries out the reaction ADP(in) + ATP(out) = ADP(out) + ATP(in). ADP:ATP antiporter that catalyzes the exchange of ADP and ATP across the membrane. This is Probable ADP,ATP carrier protein At5g56450 from Arabidopsis thaliana (Mouse-ear cress).